We begin with the raw amino-acid sequence, 862 residues long: Valine--tRNA ligase (862 aa).

Positions 43–53 (PNVTGSLHMGH) match the 'HIGH' region motif. Zn(2+) is bound by residues Cys176, Cys179, Cys344, Cys347, Cys417, Cys420, Cys438, and Cys441. Positions 528-532 (KMSKS) match the 'KMSKS' region motif. Lys531 lines the ATP pocket. Positions 802–862 (RRRQEKRLKE…RIREALSQIG (61 aa)) form a coiled coil.

Belongs to the class-I aminoacyl-tRNA synthetase family. ValS type 1 subfamily. Monomer. Zn(2+) is required as a cofactor.

The protein localises to the cytoplasm. It carries out the reaction tRNA(Val) + L-valine + ATP = L-valyl-tRNA(Val) + AMP + diphosphate. Catalyzes the attachment of valine to tRNA(Val). As ValRS can inadvertently accommodate and process structurally similar amino acids such as threonine, to avoid such errors, it has a 'posttransfer' editing activity that hydrolyzes mischarged Thr-tRNA(Val) in a tRNA-dependent manner. The chain is Valine--tRNA ligase from Thermus thermophilus (strain ATCC BAA-163 / DSM 7039 / HB27).